We begin with the raw amino-acid sequence, 281 residues long: NADH-cytochrome b5 reductase 1 (281 aa).

Residues 2 to 22 (VPGKFIFTATFVLLCTIIAVV) traverse the membrane as a helical segment. The region spanning 37-141 (EKLQEFPLVA…RGPKGFYHYQ (105 aa)) is the FAD-binding FR-type domain. Residues 121 to 136 (AQLNIGDKIKVRGPKG) and 147 to 179 (EIGMIAGGTGIAPMYQIMKSIFANDSDKTKVSL) contribute to the FAD site.

The protein belongs to the flavoprotein pyridine nucleotide cytochrome reductase family. Monomer. Component of the 2-(3-amino-3-carboxypropyl)histidine synthase complex composed of DPH1, DPH2, DPH3 and a NADH-dependent reductase, predominantly CBR1. Requires FAD as cofactor.

The protein resides in the mitochondrion outer membrane. The catalysed reaction is 2 Fe(III)-[cytochrome b5] + NADH = 2 Fe(II)-[cytochrome b5] + NAD(+) + H(+). It catalyses the reaction 2 Fe(3+)-[Dph3] + NADH = 2 Fe(2+)-[Dph3] + NAD(+) + H(+). It participates in protein modification; peptidyl-diphthamide biosynthesis. In terms of biological role, NADH-dependent reductase for DPH3 and cytochrome b5. Required for the first step of diphthamide biosynthesis, a post-translational modification of histidine which occurs in elongation factor 2. DPH1 and DPH2 transfer a 3-amino-3-carboxypropyl (ACP) group from S-adenosyl-L-methionine (SAM) to a histidine residue, the reaction is assisted by a reduction system comprising DPH3 and a NADH-dependent reductase, predominantly CBR1. By reducing DPH3, also involved in the formation of the tRNA wobble base modification mcm5s 2U (5-methoxycarbonylmethyl-2-thiouridine), mediated by the elongator complex. The cytochrome b5/NADH cytochrome b5 reductase electron transfer system supports the catalytic activity of several sterol biosynthetic enzymes. This chain is NADH-cytochrome b5 reductase 1 (CBR1), found in Kluyveromyces lactis (strain ATCC 8585 / CBS 2359 / DSM 70799 / NBRC 1267 / NRRL Y-1140 / WM37) (Yeast).